The primary structure comprises 130 residues: Blasticidin-S deaminase (130 aa).

The region spanning 1 to 129 (MPLSQEESTL…ELLPSGYVWE (129 aa)) is the CMP/dCMP-type deaminase domain. Substrate is bound at residue Ser28. Cys54 contacts Zn(2+). The Proton donor role is filled by Glu56. Arg82 contributes to the substrate binding site. Residues Cys88 and Cys91 each coordinate Zn(2+). Residues Tyr126 and Trp128 each coordinate substrate.

This sequence belongs to the cytidine and deoxycytidylate deaminase family. In terms of assembly, homotetramer. Zn(2+) is required as a cofactor.

The catalysed reaction is blasticidin S + H2O + H(+) = deaminohydroxyblasticidin S + NH4(+). In terms of biological role, catalyzes the deamination of the cytosine moiety of the antibiotics blasticidin S, cytomycin and acetylblasticidin S. This chain is Blasticidin-S deaminase (bsd), found in Aspergillus terreus.